Consider the following 546-residue polypeptide: MAKEIKYDMDARDLLKKGVDELANAVKVTLGPKGRNVIIEKKFGAPHITKDGVTVAKEVELTCPFENMGAQLVKEVASKTNDNAGDGTTTATVLAQSIIGVGLKNVTAGANPMDLKRGIDKAVAKVVESIANQAEAVGDKFEKIEHVAKISANGDEAIGKLIAEAMQRVKTEGVITVEEAKGTETTVDVVEGMQFDRGYISPYFVTDTEKMECQMENPYILIYDKKISVLKDLLPILEPTVQSGRPLLIIAEDIDSEALATLVVNRLRGSLKICAVKAPGFGDRRKAMLEDIAVLTGGTVISEEKGLKLEGATMDMLGTAEKITVDKDTTTIVNGAGDKEAIQARIGQIKIQMENTTSDYDKEKLQERLAKMAGGVAVLYVGAPSEVEMKEKKDRVDDALHATRAAIEEGTVPGGGVAYIRAIDALEGMKGDNEDETTGIEIVKRAIEEPLRQIVANAGKEGAVIVQKVKEGKGDFGYNARKDCFENLCEAGVIDPAKVTRVALENAASIAGMFLTTECVIAEKKEETPAMPPMNPGMGGGMGGMM.

ATP-binding positions include 29–32 (TLGP), K50, 86–90 (DGTTT), G415, and D495.

Belongs to the chaperonin (HSP60) family. In terms of assembly, forms a cylinder of 14 subunits composed of two heptameric rings stacked back-to-back. Interacts with the co-chaperonin GroES.

It localises to the cytoplasm. The enzyme catalyses ATP + H2O + a folded polypeptide = ADP + phosphate + an unfolded polypeptide.. Together with its co-chaperonin GroES, plays an essential role in assisting protein folding. The GroEL-GroES system forms a nano-cage that allows encapsulation of the non-native substrate proteins and provides a physical environment optimized to promote and accelerate protein folding. This chain is Chaperonin GroEL, found in Parabacteroides distasonis (strain ATCC 8503 / DSM 20701 / CIP 104284 / JCM 5825 / NCTC 11152).